Reading from the N-terminus, the 72-residue chain is Altered inheritance of mitochondria protein 4 (72 aa).

It belongs to the AIM4 family.

It is found in the cytoplasm. This Zygosaccharomyces rouxii (strain ATCC 2623 / CBS 732 / NBRC 1130 / NCYC 568 / NRRL Y-229) protein is Altered inheritance of mitochondria protein 4 (AIM4).